A 502-amino-acid polypeptide reads, in one-letter code: Protein DETOXIFICATION 55 (502 aa).

The next 12 membrane-spanning stretches (helical) occupy residues 30–50 (IWDI…KNMT), 61–81 (LELA…YSVL), 112–132 (IFLL…LAPL), 145–165 (VASL…FLHP), 185–205 (VSVL…SLGV), 207–227 (GVAV…LCYI), 261–283 (VWST…WWWY), 298–318 (VALA…TIPT), 344–364 (ATVA…GTTV), 378–398 (VVLE…LANC), 419–439 (INFY…AFVW), and 447–467 (CYGL…VVYN).

It belongs to the multi antimicrobial extrusion (MATE) (TC 2.A.66.1) family.

The protein localises to the membrane. This chain is Protein DETOXIFICATION 55, found in Arabidopsis thaliana (Mouse-ear cress).